A 639-amino-acid polypeptide reads, in one-letter code: ATP-dependent zinc metalloprotease FtsH (639 aa).

Residues 1–4 (MNST) lie on the Cytoplasmic side of the membrane. A helical membrane pass occupies residues 5–25 (VKTIVFWVFILACCILLWQVF). The Periplasmic segment spans residues 26-104 (QRSSNTGKEQ…TVKDNSGSPW (79 aa)). The helical transmembrane segment at 105-125 (WSILIQFSPVLVLVALWFFMI) threads the bilayer. Topologically, residues 126–639 (RQMQSGGNKA…GLPEGSPSPA (514 aa)) are cytoplasmic. 196-203 (GPPGTGKT) is a binding site for ATP. Zn(2+) is bound at residue His418. Residue Glu419 is part of the active site. The Zn(2+) site is built by His422 and Asp494. The disordered stretch occupies residues 597 to 639 (KDLPPLKPSGGSGTATTDDVQQVLKPSSDRGAGGLPEGSPSPA).

In the central section; belongs to the AAA ATPase family. This sequence in the C-terminal section; belongs to the peptidase M41 family. As to quaternary structure, homohexamer. Requires Zn(2+) as cofactor.

It is found in the cell inner membrane. Functionally, acts as a processive, ATP-dependent zinc metallopeptidase for both cytoplasmic and membrane proteins. Plays a role in the quality control of integral membrane proteins. This chain is ATP-dependent zinc metalloprotease FtsH, found in Acidobacterium capsulatum (strain ATCC 51196 / DSM 11244 / BCRC 80197 / JCM 7670 / NBRC 15755 / NCIMB 13165 / 161).